A 374-amino-acid chain; its full sequence is uncharacterized protein (374 aa).

G29–S36 lines the ATP pocket.

It belongs to the archaeal ATPase family.

This is an uncharacterized protein from Methanocaldococcus jannaschii (strain ATCC 43067 / DSM 2661 / JAL-1 / JCM 10045 / NBRC 100440) (Methanococcus jannaschii).